The chain runs to 228 residues: Carboxy-S-adenosyl-L-methionine synthase (228 aa).

Residues Y30, 55–57, 79–80, and 103–104 each bind S-adenosyl-L-methionine; these read GSS, DN, and DV.

The protein belongs to the class I-like SAM-binding methyltransferase superfamily. Cx-SAM synthase family.

It carries out the reaction prephenate + S-adenosyl-L-methionine = carboxy-S-adenosyl-L-methionine + 3-phenylpyruvate + H2O. In terms of biological role, catalyzes the conversion of S-adenosyl-L-methionine (SAM) to carboxy-S-adenosyl-L-methionine (Cx-SAM). The protein is Carboxy-S-adenosyl-L-methionine synthase of Staphylococcus epidermidis (strain ATCC 35984 / DSM 28319 / BCRC 17069 / CCUG 31568 / BM 3577 / RP62A).